Here is a 582-residue protein sequence, read N- to C-terminus: ATP-dependent lipid A-core flippase (582 aa).

The next 5 helical transmembrane spans lie at 16–36 (LWPT…ALIL), 64–84 (LLWM…TSYI), 153–173 (IIGL…ILVV), 253–273 (PIIQ…ASFP), and 275–295 (VMDS…IALM). An ABC transmembrane type-1 domain is found at 28-310 (IVAGIALILN…LTNVNAQFQR (283 aa)). The ABC transporter domain maps to 342-578 (LEFRNVTFTY…HGVYAQLHKM (237 aa)). An ATP-binding site is contributed by 376 to 383 (GRSGSGKS).

The protein belongs to the ABC transporter superfamily. Lipid exporter (TC 3.A.1.106) family. Homodimer.

Its subcellular location is the cell inner membrane. The catalysed reaction is ATP + H2O + lipid A-core oligosaccharideSide 1 = ADP + phosphate + lipid A-core oligosaccharideSide 2.. Its function is as follows. Involved in lipopolysaccharide (LPS) biosynthesis. Translocates lipid A-core from the inner to the outer leaflet of the inner membrane. Transmembrane domains (TMD) form a pore in the inner membrane and the ATP-binding domain (NBD) is responsible for energy generation. This chain is ATP-dependent lipid A-core flippase, found in Salmonella choleraesuis (strain SC-B67).